A 536-amino-acid chain; its full sequence is Protoporphyrinogen oxidase, chloroplastic (536 aa).

Residues 1–36 (MAAAAAAMATATSATAAPPLRIRDAARRTRRRGHVR) constitute a chloroplast transit peptide. FAD contacts are provided by residues 62–67 (GGGISG), 87–88 (EA), and 111–114 (GPNS). Positions 248–272 (TIKTIQERGKNPKPPRDPRLPTPKG) are disordered. Positions 252 to 266 (IQERGKNPKPPRDPR) are enriched in basic and acidic residues. 510 to 512 (VAL) is an FAD binding site.

The protein belongs to the protoporphyrinogen/coproporphyrinogen oxidase family. Protoporphyrinogen oxidase subfamily. It depends on FAD as a cofactor.

It localises to the plastid. The protein resides in the chloroplast. It catalyses the reaction protoporphyrinogen IX + 3 O2 = protoporphyrin IX + 3 H2O2. Its pathway is porphyrin-containing compound metabolism; protoporphyrin-IX biosynthesis; protoporphyrin-IX from protoporphyrinogen-IX: step 1/1. It participates in porphyrin-containing compound metabolism; chlorophyll biosynthesis. In terms of biological role, catalyzes the 6-electron oxidation of protoporphyrinogen-IX to form protoporphyrin-IX. This is Protoporphyrinogen oxidase, chloroplastic (PPOX1) from Oryza sativa subsp. japonica (Rice).